The primary structure comprises 536 residues: Small conductance calcium-activated potassium channel protein 1 (536 aa).

Residues 1–90 form a disordered region; sequence MSSRSHNGSV…KPPTVSHRLG (90 aa). Over residues 65 to 75 the composition is skewed to acidic residues; that stretch reads QEEEEEEEDED. The helical transmembrane segment at 107–127 threads the bilayer; it reads LIFGMFGIVVMVTETELSWGV. Residues 136–156 traverse the membrane as a helical segment; it reads FALKCLISLSTVILLGLVILY. The chain crosses the membrane as a helical span at residues 224-244; the sequence is VLLSIPMFLRLYLLARVMLLH. The chain crosses the membrane as a helical span at residues 273–293; it reads LMTICPGTVLLVFSISSWIVA. A helical membrane pass occupies residues 313–333; that stretch reads FLGAMWLISITFLSIGYGDMV. The pore-forming intramembrane region spans 342–362; sequence VCLLTGIMGAGCTALVVAVVA. Residues 380-459 are calmodulin-binding; it reads DTQLTKRVKN…LADLAKAQSI (80 aa). The helical transmembrane segment at 487–507 threads the bilayer; the sequence is VLGASLQALPSLIAQAICPLP. Residues 514 to 536 form a disordered region; the sequence is SHLTTAAQSPQSHWLPTTASDCG. Polar residues predominate over residues 515–536; the sequence is HLTTAAQSPQSHWLPTTASDCG.

Belongs to the potassium channel KCNN family. KCa2.1/KCNN1 subfamily. In terms of assembly, homodimer. Heteromultimer with KCNN2 and KCNN3. The complex is composed of 4 channel subunits each of which binds to a calmodulin subunit which regulates the channel activity through calcium-binding. Interacts with calmodulin. In terms of tissue distribution, widely expressed including brain.

It is found in the membrane. The protein resides in the cytoplasm. It localises to the myofibril. Its subcellular location is the sarcomere. The protein localises to the z line. The enzyme catalyses K(+)(in) = K(+)(out). Its activity is regulated as follows. Inhibited by bee venom neurotoxin apamin. Inhibited by d-tubocurarine and tetraethylammonium (TEA). Its function is as follows. Small conductance calcium-activated potassium channel that mediates the voltage-independent transmembrane transfer of potassium across the cell membrane through a constitutive interaction with calmodulin which binds the intracellular calcium allowing its opening. The current is characterized by a voltage-independent activation, an intracellular calcium concentration increase-dependent activation and a single-channel conductance of about 3 picosiemens. Also presents an inwardly rectifying current, thus reducing its already small outward conductance of potassium ions, which is particularly the case when the membrane potential displays positive values, above + 20 mV. Activation is followed by membrane hyperpolarization. Thought to regulate neuronal excitability by contributing to the slow component of synaptic afterhyperpolarization. This is Small conductance calcium-activated potassium channel protein 1 from Rattus norvegicus (Rat).